A 211-amino-acid chain; its full sequence is FMN-dependent NADH:quinone oxidoreductase 2 (211 aa).

An FMN-binding site is contributed by 17–19 (SYS).

Belongs to the azoreductase type 1 family. As to quaternary structure, homodimer. It depends on FMN as a cofactor.

The catalysed reaction is 2 a quinone + NADH + H(+) = 2 a 1,4-benzosemiquinone + NAD(+). The enzyme catalyses N,N-dimethyl-1,4-phenylenediamine + anthranilate + 2 NAD(+) = 2-(4-dimethylaminophenyl)diazenylbenzoate + 2 NADH + 2 H(+). Strongly inhibited by Pb(2+) and weakly inhibited by Cu(2+), Hg(2+) and Fe(2+). Stable in presence of Ag(+). Quinone reductase that provides resistance to thiol-specific stress caused by electrophilic quinones. Contributes to resistance to 2-methylhydroquinone (2-MHQ) and catechol. Exhibits NADH-dependent 2,6-dichloroindophenol (DCIP) oxidoreductase activity. Functionally, also exhibits azoreductase activity. Catalyzes the reductive cleavage of the azo bond in aromatic azo compounds to the corresponding amines. Can reduce methyl red. The polypeptide is FMN-dependent NADH:quinone oxidoreductase 2 (Bacillus subtilis (strain 168)).